The primary structure comprises 307 residues: Probable 2-methylisocitrate lyase 2 (307 aa).

Residue 53–55 coordinates substrate; the sequence is SGA. Mg(2+) is bound by residues aspartate 92 and aspartate 94. Residues 129–130, arginine 164, glutamate 194, 216–218, arginine 247, and arginine 276 each bind substrate; these read CG and NMT.

Belongs to the isocitrate lyase/PEP mutase superfamily. Methylisocitrate lyase family. As to quaternary structure, homotetramer; dimer of dimers. It depends on Mg(2+) as a cofactor.

It carries out the reaction (2S,3R)-3-hydroxybutane-1,2,3-tricarboxylate = pyruvate + succinate. The protein operates within organic acid metabolism; propanoate degradation. In terms of biological role, involved in the catabolism of short chain fatty acids (SCFA) via the 2-methylcitrate cycle I (propionate degradation route). Catalyzes the thermodynamically favored C-C bond cleavage of (2R,3S)-2-methylisocitrate to yield pyruvate and succinate via an alpha-carboxy-carbanion intermediate. The protein is Probable 2-methylisocitrate lyase 2 of Corynebacterium glutamicum (strain ATCC 13032 / DSM 20300 / JCM 1318 / BCRC 11384 / CCUG 27702 / LMG 3730 / NBRC 12168 / NCIMB 10025 / NRRL B-2784 / 534).